The chain runs to 102 residues: Apolipoprotein A-II (102 aa).

A signal peptide spans 1-18 (MKLLAMVALLVTICSLEG). Position 49 is a methionine sulfoxide (methionine 49).

It belongs to the apolipoprotein A2 family. As to quaternary structure, monomer. Interacts with NAXE and NDRG1. Plasma.

The protein resides in the secreted. Its function is as follows. May stabilize HDL (high density lipoprotein) structure by its association with lipids, and affect the HDL metabolism. This Rattus norvegicus (Rat) protein is Apolipoprotein A-II (Apoa2).